Here is a 267-residue protein sequence, read N- to C-terminus: Acyl-[acyl-carrier-protein]--UDP-N-acetylglucosamine O-acyltransferase (267 aa).

Belongs to the transferase hexapeptide repeat family. LpxA subfamily. As to quaternary structure, homotrimer.

It localises to the cytoplasm. It carries out the reaction a (3R)-hydroxyacyl-[ACP] + UDP-N-acetyl-alpha-D-glucosamine = a UDP-3-O-[(3R)-3-hydroxyacyl]-N-acetyl-alpha-D-glucosamine + holo-[ACP]. The protein operates within glycolipid biosynthesis; lipid IV(A) biosynthesis; lipid IV(A) from (3R)-3-hydroxytetradecanoyl-[acyl-carrier-protein] and UDP-N-acetyl-alpha-D-glucosamine: step 1/6. In terms of biological role, involved in the biosynthesis of lipid A, a phosphorylated glycolipid that anchors the lipopolysaccharide to the outer membrane of the cell. The sequence is that of Acyl-[acyl-carrier-protein]--UDP-N-acetylglucosamine O-acyltransferase from Cupriavidus taiwanensis (strain DSM 17343 / BCRC 17206 / CCUG 44338 / CIP 107171 / LMG 19424 / R1) (Ralstonia taiwanensis (strain LMG 19424)).